The chain runs to 214 residues: Thymidylate kinase (214 aa).

Position 7–14 (7–14 (GIEGAGKT)) interacts with ATP.

This sequence belongs to the thymidylate kinase family.

The enzyme catalyses dTMP + ATP = dTDP + ADP. Phosphorylation of dTMP to form dTDP in both de novo and salvage pathways of dTTP synthesis. This is Thymidylate kinase from Desulfosudis oleivorans (strain DSM 6200 / JCM 39069 / Hxd3) (Desulfococcus oleovorans).